The sequence spans 166 residues: Large ribosomal subunit protein bL19 (166 aa).

It belongs to the bacterial ribosomal protein bL19 family. In terms of assembly, part of the 50S ribosomal subunit. Forms a cluster with proteins L3 and L14.

In terms of biological role, this protein is located at the 30S-50S ribosomal subunit interface and may play a role in the structure and function of the aminoacyl-tRNA binding site. Binds the 23S rRNA. The protein is Large ribosomal subunit protein bL19 (rplS) of Deinococcus radiodurans (strain ATCC 13939 / DSM 20539 / JCM 16871 / CCUG 27074 / LMG 4051 / NBRC 15346 / NCIMB 9279 / VKM B-1422 / R1).